The following is a 545-amino-acid chain: ATP synthase subunit alpha (545 aa).

173–180 (GDRQTGKT) serves as a coordination point for ATP.

This sequence belongs to the ATPase alpha/beta chains family. In terms of assembly, F-type ATPases have 2 components, CF(1) - the catalytic core - and CF(0) - the membrane proton channel. CF(1) has five subunits: alpha(3), beta(3), gamma(1), delta(1), epsilon(1). CF(0) has three main subunits: a(1), b(2) and c(9-12). The alpha and beta chains form an alternating ring which encloses part of the gamma chain. CF(1) is attached to CF(0) by a central stalk formed by the gamma and epsilon chains, while a peripheral stalk is formed by the delta and b chains.

The protein localises to the cell membrane. It carries out the reaction ATP + H2O + 4 H(+)(in) = ADP + phosphate + 5 H(+)(out). Functionally, produces ATP from ADP in the presence of a proton gradient across the membrane. The alpha chain is a regulatory subunit. The protein is ATP synthase subunit alpha of Leifsonia xyli subsp. xyli (strain CTCB07).